Reading from the N-terminus, the 726-residue chain is Cyclic nucleotide-gated ion channel 2 (726 aa).

Residues 1–127 are Cytoplasmic-facing; the sequence is MPSHPNFIFR…SKRVQRWNRA (127 aa). The tract at residues 26 to 46 is disordered; sequence IDENSNLQINGGDSSSSGSDE. The span at 36–45 shows a compositional bias: low complexity; it reads GGDSSSSGSD. Residues 128–148 form a helical membrane-spanning segment; the sequence is LLLARGMALAVDPLFFYALSI. Residues 149–162 lie on the Extracellular side of the membrane; it reads GRTTGPACLYMDGA. The helical transmembrane segment at 163–183 threads the bilayer; sequence FAAVVTVLRTCLDAVHLWHVW. Residues 184 to 219 lie on the Cytoplasmic side of the membrane; that stretch reads LQFRLAYVSRESLVVGCGKLVWDPRAIASHYARSLT. A helical transmembrane segment spans residues 220-240; it reads GFWFDVIVILPVPQAVFWLVV. At 241–254 the chain is on the extracellular side; it reads PKLIREEKVKLIMT. A helical transmembrane segment spans residues 255–275; it reads ILLLIFLFQFLPKIYHCICLM. Over 276–282 the chain is Cytoplasmic; the sequence is RRMQKVT. A helical transmembrane segment spans residues 283–303; it reads GYIFGTIWWGFALNLIAYFIA. Topologically, residues 304–424 are extracellular; that stretch reads SHVAGGCWYV…ANDLEPTSNW (121 aa). A helical transmembrane segment spans residues 425 to 445; that stretch reads LEVIFSIVMVLSGLLLFTLLI. The Cytoplasmic segment spans residues 446-726; that stretch reads GNIQVFLHAV…MSIRPHDHLE (281 aa). A nucleoside 3',5'-cyclic phosphate contacts are provided by residues 531 to 661 and Asp600; that span reads LFRG…ARYY. Residues 645 to 661 form a calmodulin-binding region; sequence FRYKFANERLKRTARYY. In terms of domain architecture, IQ spans 666–695; it reads RTWAAVNIQMAWRRRRKRTRGENIGGSMSP.

It belongs to the cyclic nucleotide-gated cation channel (TC 1.A.1.5) family. In terms of assembly, homotetramer or heterotetramer (Potential). Binds calmodulin-1/4 with a higher affinity than calmodulin-2/3/5. Expressed in the whole plant but only weakly in roots. Strongly expressed in the expanded cotyledons of 14-day-old seedlings and detected later in leaves after the transition to flowering. Also detected in flowers during organ senescence and in the dehiscence zone of siliques.

It is found in the cell membrane. Functionally, acts as a cyclic nucleotide-gated ion channel. Permeable to potassium and calcium in a cyclic nucleotide-dependent fashion (cAMP or cGMP). Could also transport lithium, cesium and rubium and displays a strong selectivity against sodium. Seems to directly participate in pathogen-induced calcium influx. May function in homeostasis, re-establishing ionic balance after defense action and/or other stimuli. Could mediate the initiation of the developmentally regulated cell death programs. The polypeptide is Cyclic nucleotide-gated ion channel 2 (CNGC2) (Arabidopsis thaliana (Mouse-ear cress)).